An 882-amino-acid chain; its full sequence is Liprin-beta-2 (882 aa).

The stretch at 101–303 (AASNETYQER…DKDRRIEELT (203 aa)) forms a coiled coil. Ser-328, Ser-362, and Ser-386 each carry phosphoserine. The interval 339 to 554 (RKWNTTNKSP…SRTRDTKGQK (216 aa)) is disordered. Positions 388 to 399 (EDLRRESGDKCV) are enriched in basic and acidic residues. Composition is skewed to polar residues over residues 442-457 (PTASLQPDSSGSSQPK) and 481-495 (SSASSGTESSPQSPV). Phosphoserine is present on residues Ser-502 and Ser-518. Basic residues predominate over residues 502–515 (SPKGIKKFWGKIRR). SAM domains are found at residues 564–628 (WSTE…INAK), 636–699 (LDHI…LHVN), and 724–789 (WSNH…KFNA).

It belongs to the liprin family. Liprin-beta subfamily. As to quaternary structure, forms homodimers and heterodimers. In terms of tissue distribution, expressed widely. Strong expression in liver, kidney, intestine, heart, lung and testis. Low expression in brain and thymus.

In terms of biological role, may regulate the disassembly of focal adhesions. Did not bind receptor-like tyrosine phosphatases type 2A. The polypeptide is Liprin-beta-2 (Ppfibp2) (Mus musculus (Mouse)).